Reading from the N-terminus, the 199-residue chain is Large ribosomal subunit protein bL25 (199 aa).

The protein belongs to the bacterial ribosomal protein bL25 family. CTC subfamily. Part of the 50S ribosomal subunit; part of the 5S rRNA/L5/L18/L25 subcomplex. Contacts the 5S rRNA. Binds to the 5S rRNA independently of L5 and L18.

In terms of biological role, this is one of the proteins that binds to the 5S RNA in the ribosome where it forms part of the central protuberance. This is Large ribosomal subunit protein bL25 from Pelodictyon phaeoclathratiforme (strain DSM 5477 / BU-1).